We begin with the raw amino-acid sequence, 236 residues long: Rho-related GTP-binding protein RhoV (236 aa).

A disordered region spans residues 1 to 27 (MPPRELSEAESSPLRSPTPPPGRGSAS). S25 is modified (phosphoserine). GTP contacts are provided by residues 38–45 (GDGAVGKS), 85–89 (DTAGQ), and 143–146 (TQAD). Residue C234 is the site of S-palmitoyl cysteine attachment.

The protein belongs to the small GTPase superfamily. Rho family. In terms of assembly, interacts with PAK2. The cofactor is Mg(2+).

It is found in the cell membrane. The protein resides in the endosome membrane. In terms of biological role, plays a role in the control of the actin cytoskeleton via activation of the JNK pathway. The protein is Rho-related GTP-binding protein RhoV of Bos taurus (Bovine).